Consider the following 587-residue polypeptide: MNSQGYDESSSSTAATSGPTSGDPRMGKKQRFMNLIRTTKDVYIPNLTSSISQKTMDGIRSTTNSFEGYNDLPMELPHNTTITYFPTYTTTNLVDPDGLSAPRKDFETTVRCAVSYPGNPTSRRNRWLLSLCKQYLRTGTAEADVAPVVPPHLEEDSGDLNDSQSSIESSLSSKSENRYSHMGIQEEDVLNERIQGFLSKKVPNTPVVVDLLPKDKLRGDTASFFGTTDSYGNLLIKAETDFLPSKINITLDTPIEGHADPISETFPANYVSPYGIGLISDIDDTIKHTGVTGDRRSMFRNVFIHDVQSWVIDGVPLWYKTLHDVADVDFFYVSNSPIQTFTLLKQYICANFPPGPIFLKQYSGNFFSTIMTSSANRKIQPIANILKDFPKKKFILVGDSGEHDLEAYTTTALQFPNQILAIYIRCCSNSMSDVPSHDEEVMNEVNNIIELQQRPMQMTKSTVRTRRRPPPPPIPSTQKPSLTEEQTESIRMSRRNKDENNAKRVAPPPLPNRQLPNLDANTYYVPSSQNDYGMYGAFMDKKADEWKRRVMDSIQKLSNQDTTLMFFSDPALSLEDSIRRIREKYSN.

2 disordered regions span residues 1-28 and 150-178; these read MNSQ…RMGK and PPHL…SENR. Composition is skewed to low complexity over residues 9-22 and 163-174; these read SSSS…PTSG and SQSSIESSLSSK. A DXDXT motif motif is present at residues 281-285; sequence DIDDT. The tract at residues 452–521 is disordered; that stretch reads QQRPMQMTKS…NRQLPNLDAN (70 aa). Residues 467-483 are interaction with SH3 domain of ABP1; that stretch reads RRPPPPPIPSTQKPSLT.

Monomer. Interacts with ABP1. Mg(2+) is required as a cofactor. Post-translationally, N-glycosylated.

The protein localises to the cytoplasm. The protein resides in the cytoskeleton. Its subcellular location is the actin patch. The catalysed reaction is a 1,2-diacyl-sn-glycero-3-phosphate + H2O = a 1,2-diacyl-sn-glycerol + phosphate. It carries out the reaction 1,2-di-(9Z-octadecenoyl)-sn-glycero-3-phosphate + H2O = 1,2-di-(9Z-octadecenoyl)-sn-glycerol + phosphate. With respect to regulation, inhibited by N-ethylmaleimide. In terms of biological role, mg(2+)-dependent phosphatidate (PA) phosphatase which catalyzes the dephosphorylation of PA to yield diacylglycerol. May play a role in vesicular trafficking through its PAP activity at cortical actin patches. Can also utilize diacylglycerol pyrophosphate and lyso-PA as substrates with specificity constants 4- and 7-fold lower, respectively, when compared with PA. This is Phosphatidate phosphatase APP1 (APP1) from Saccharomyces cerevisiae (strain ATCC 204508 / S288c) (Baker's yeast).